The following is a 334-amino-acid chain: MEKATLNSIQKSVWEGQIPLKIVLAPSESRTYDQTDPYLISYPRISYLPSLLPRLKAFFSSSLIDPTASQPHDGWFSFEGVPLKWHYPVGLLYDLYAGAEPATKSSETEALDDEQLPWRLVVHFGDWPDAELVRLDAQGTVMHDAFINSVKEADFVRNGTAKGIMTLSKDDSSGLWKAVQDVDLPSFQRIMNILLPPNPHQPLRNLPVRLFLPLPPKPDSNSDSPFLKVVQSPIPPTISTTPSQLQRQMAQSTLSSSGVSGSSPGAAQPQPQTQTIGTALHSILPNLFPSRRTPVIAKPVLHGAQVPMSAPVEEVVRAAAYGDGWVYIVIRMMG.

A Glycyl lysine isopeptide (Lys-Gly) (interchain with G-Cter in ATG12) cross-link involves residue Lys-151. Residues 237-272 (TISTTPSQLQRQMAQSTLSSSGVSGSSPGAAQPQPQ) are disordered. Low complexity predominate over residues 252–272 (STLSSSGVSGSSPGAAQPQPQ).

This sequence belongs to the ATG5 family. Conjugated with atg12. In terms of processing, conjugated to atg12; which is essential for autophagy.

The protein localises to the preautophagosomal structure membrane. Involved in cytoplasm to vacuole transport (Cvt) and autophagic vesicle formation. Autophagy is essential for maintenance of amino acid levels and protein synthesis under nitrogen starvation. Required for selective autophagic degradation of the nucleus (nucleophagy). Also required for mitophagy, which eliminates defective or superfluous mitochondria in order to fulfill cellular energy requirements and prevent excess ROS production. Conjugation with atg12, through a ubiquitin-like conjugating system involving atg7 as an E1-like activating enzyme and atg10 as an E2-like conjugating enzyme, is essential for its function. The atg12-atg5 conjugate acts as an E3-like enzyme which is required for lipidation of atg8 and atg8 association to the vesicle membranes. The sequence is that of Autophagy protein 5 (atg5) from Emericella nidulans (strain FGSC A4 / ATCC 38163 / CBS 112.46 / NRRL 194 / M139) (Aspergillus nidulans).